The following is a 414-amino-acid chain: Glutamyl-tRNA reductase (414 aa).

Substrate contacts are provided by residues 47-50 (TCNR), Ser106, 111-113 (EAQ), and Gln117. Catalysis depends on Cys48, which acts as the Nucleophile. Residue 185–190 (GAGRTG) coordinates NADP(+).

This sequence belongs to the glutamyl-tRNA reductase family. Homodimer.

The enzyme catalyses (S)-4-amino-5-oxopentanoate + tRNA(Glu) + NADP(+) = L-glutamyl-tRNA(Glu) + NADPH + H(+). It participates in porphyrin-containing compound metabolism; protoporphyrin-IX biosynthesis; 5-aminolevulinate from L-glutamyl-tRNA(Glu): step 1/2. Catalyzes the NADPH-dependent reduction of glutamyl-tRNA(Glu) to glutamate 1-semialdehyde (GSA). This chain is Glutamyl-tRNA reductase, found in Herpetosiphon aurantiacus (strain ATCC 23779 / DSM 785 / 114-95).